The primary structure comprises 455 residues: Ribosomal protein uS12 methylthiotransferase RimO (455 aa).

In terms of domain architecture, MTTase N-terminal spans proline 30–proline 140. The [4Fe-4S] cluster site is built by cysteine 39, cysteine 75, cysteine 104, cysteine 171, cysteine 175, and cysteine 178. One can recognise a Radical SAM core domain in the interval leucine 157 to valine 386. The TRAM domain maps to alanine 389–valine 455.

The protein belongs to the methylthiotransferase family. RimO subfamily. Requires [4Fe-4S] cluster as cofactor.

It localises to the cytoplasm. It carries out the reaction L-aspartate(89)-[ribosomal protein uS12]-hydrogen + (sulfur carrier)-SH + AH2 + 2 S-adenosyl-L-methionine = 3-methylsulfanyl-L-aspartate(89)-[ribosomal protein uS12]-hydrogen + (sulfur carrier)-H + 5'-deoxyadenosine + L-methionine + A + S-adenosyl-L-homocysteine + 2 H(+). Its function is as follows. Catalyzes the methylthiolation of an aspartic acid residue of ribosomal protein uS12. The polypeptide is Ribosomal protein uS12 methylthiotransferase RimO (Cereibacter sphaeroides (strain ATCC 17023 / DSM 158 / JCM 6121 / CCUG 31486 / LMG 2827 / NBRC 12203 / NCIMB 8253 / ATH 2.4.1.) (Rhodobacter sphaeroides)).